A 646-amino-acid polypeptide reads, in one-letter code: MSYESGRSSSSSESTRPPTLKEEPNGKIAWEESVKKSRENNENDSTLLRRKLGETRKAIETGGSSRNKLSALTPLKKVVDERKDSVQPQVPSMGFTYSLPNLKTLNSFSDAEQARIMQDYLSRGVNQGNSNNYVDPLYRQLNPTMGSSRNRPVWSLNQPLPHVLDRGLAAKMIQKNMDARSRASSRRGSTDISRGGSTTSVKDWKRLLRGAAPGKKLGDIEAQTQRDNTVGADVKPTKLEPENPQKPSNTHIENVSRKKKRTSHNVNFSLGDESYASSIADAESRKLKNMQTLDGSTPVYTKLPEELIEEENKSTSALDGNEIGASEDEDADIMTFPNFWAKIRYHMREPFAEFLGTLVLVIFGVGGNLQATVTKGSGGSYESLSFAWGFGCMLGVYVAGGISGGHINPAVTISMAIFRKFPWKKVPVYIVAQIIGAYFGGAMAYGYFWSSITEFEGGPHIRTTATGACLFTDPKSYVTWRNAFFDEFIGASILVGCLMALLDDSNAPPGNGMTALIIGFLVAAIGMALGYQTSFTINPARDLGPRIFASMIGYGPHAFHLTHWWWTWGAWGGPIAGGIAGALIYDIFIFTGCESPVNYPDNGYIENRVGKLLHAEFHQNDGTVSDESGVNSNSNTGSKKSVPTSS.

A compositionally biased stretch (low complexity) spans Met-1–Ser-14. Disordered regions lie at residues Met-1 to Lys-68 and Lys-175 to Thr-262. At Met-1–Pro-350 the chain is on the cytoplasmic side. Basic and acidic residues predominate over residues Thr-19 to Asn-41. The segment covering Thr-190–Val-201 has biased composition (polar residues). The chain crosses the membrane as a helical span at residues Phe-351–Ala-371. Over Thr-372–Ser-383 the chain is Extracellular. The chain crosses the membrane as a helical span at residues Leu-384–Gly-404. The Cytoplasmic portion of the chain corresponds to Gly-405–Pro-427. An NPA 1 motif is present at residues Asn-408 to Ala-410. Residues Val-428–Phe-448 traverse the membrane as a helical segment. Topologically, residues Trp-449–Arg-481 are extracellular. A helical transmembrane segment spans residues Asn-482 to Leu-502. Residues Asp-503–Pro-509 are Cytoplasmic-facing. The chain crosses the membrane as a helical span at residues Gly-510–Gly-530. The Extracellular segment spans residues Tyr-531–Gly-569. Positions Asn-538–Ala-540 match the NPA 2 motif. The helical transmembrane segment at Ala-570–Phe-590 threads the bilayer. Residues Thr-591–Ser-646 are Cytoplasmic-facing. The interval Asp-621–Ser-646 is disordered.

This sequence belongs to the MIP/aquaporin (TC 1.A.8) family.

Its subcellular location is the cell membrane. It catalyses the reaction glycerol(in) = glycerol(out). Channel protein that mediates glycerol entry under ethanol stimulation. Does not seem to mediate glycerol uptake under standard conditions. The protein is Aquaglycerol porin AQY3 of Saccharomyces cerevisiae (strain ATCC 204508 / S288c) (Baker's yeast).